Consider the following 364-residue polypeptide: UDP-arabinopyranose mutase 1 (364 aa).

Residues aspartate 110 to aspartate 112 carry the DXD motif motif. Arginine 158 carries N-linked (Glc...) arginine glycosylation.

It belongs to the RGP family. Heteromers with UAM2 and UAM3. It depends on Mn(2+) as a cofactor. Mg(2+) is required as a cofactor. In terms of processing, reversibly glycosylated in vitro at Arg-158 by UDP-glucose. Reversibly glycosylated by UDP-xylose and UDP-galactose.

It localises to the golgi apparatus. It catalyses the reaction UDP-beta-L-arabinofuranose = UDP-beta-L-arabinopyranose. In terms of biological role, UDP-L-arabinose mutase involved in the biosynthesis of cell wall non-cellulosic polysaccharides. Catalyzes the interconvertion of UDP-L-arabinopyranose (UDP-Arap) and UDP-L-arabinofuranose (UDP-Araf). Preferentially catalyzes the formation of UDP-Arap from UDP-Araf. At thermodynamic equilibrium in vitro the ratio of the pyranose form over the furanose form is 90:10. Is probably active as heteromer in vivo. The protein is UDP-arabinopyranose mutase 1 of Oryza sativa subsp. japonica (Rice).